Here is a 583-residue protein sequence, read N- to C-terminus: Epsin-2 (583 aa).

Positions 8, 11, 25, 30, 63, and 73 each coordinate a 1,2-diacyl-sn-glycero-3-phospho-(1D-myo-inositol-4,5-bisphosphate). In terms of domain architecture, ENTH spans Asn-12 to Arg-144. Over residues Gln-165–His-181 the composition is skewed to polar residues. The segment at Gln-165 to Gly-217 is disordered. An Omega-N-methylarginine modification is found at Arg-170. A phosphoserine mark is found at Ser-173, Ser-192, and Ser-195. Polar residues predominate over residues His-197–Ser-216. 2 UIM domains span residues Glu-218–Glu-237 and Gly-243–Val-262. Disordered regions lie at residues Ser-293–Pro-384 and Thr-411–Phe-457. 4 repeat units span residues Glu-301–Trp-303, Asn-313–Trp-315, Asp-326–Trp-328, and Asp-340–Trp-342. Residues Glu-301–Trp-315 show a composition bias toward polar residues. Positions Glu-301–Trp-377 are 6 X 3 AA repeats of [DE]-P-W. The segment covering Thr-346–Lys-355 has biased composition (polar residues). Tandem repeats lie at residues Asp-358 to Trp-360 and Asp-375 to Trp-377. At Ser-431 the chain carries Phosphoserine. Residues Ser-437 to Ser-448 are compositionally biased toward low complexity. Residue Thr-453 is modified to Phosphothreonine. 2 tandem repeats follow at residues Asn-482–Phe-484 and Asn-496–Phe-498. Residues Asn-482–Phe-581 form a 3 X 3 AA repeats of N-P-F region. Ser-514 carries the phosphoserine modification. Repeat unit 3 spans residues Asn-579 to Phe-581.

It belongs to the epsin family. Binds AP-2 and clathrin. Interacts with ITSN1. Interacts with UBQLN2. Binds EPS15. Ubiquitinated. As to expression, highly expressed in brain. Detected at lower levels in lung, liver, muscle and testis.

The protein localises to the cytoplasm. Plays a role in the formation of clathrin-coated invaginations and endocytosis. The protein is Epsin-2 (Epn2) of Rattus norvegicus (Rat).